The sequence spans 172 residues: MFVNSVLAESNSLYIGDLVFYIVTFIILMLLVKHFAWKPVTDMMKKRADKIANDIDNAARSRESAEKMAAKRQAELQSSRQEAAEIVSNAKKSGETQRAQIVETAQKDAQALKQQAQKDAEQARRDALNSAKDDVANLSIEIASKLIQKELKADDQKELIDSYIEGLVEHES.

A helical membrane pass occupies residues 12-32; sequence SLYIGDLVFYIVTFIILMLLV. Basic and acidic residues-rich tracts occupy residues 63–74 and 116–131; these read ESAEKMAAKRQA and AQKD…LNSA. The disordered stretch occupies residues 63–131; the sequence is ESAEKMAAKR…QARRDALNSA (69 aa).

This sequence belongs to the ATPase B chain family. In terms of assembly, F-type ATPases have 2 components, F(1) - the catalytic core - and F(0) - the membrane proton channel. F(1) has five subunits: alpha(3), beta(3), gamma(1), delta(1), epsilon(1). F(0) has three main subunits: a(1), b(2) and c(10-14). The alpha and beta chains form an alternating ring which encloses part of the gamma chain. F(1) is attached to F(0) by a central stalk formed by the gamma and epsilon chains, while a peripheral stalk is formed by the delta and b chains.

The protein localises to the cell membrane. Functionally, f(1)F(0) ATP synthase produces ATP from ADP in the presence of a proton or sodium gradient. F-type ATPases consist of two structural domains, F(1) containing the extramembraneous catalytic core and F(0) containing the membrane proton channel, linked together by a central stalk and a peripheral stalk. During catalysis, ATP synthesis in the catalytic domain of F(1) is coupled via a rotary mechanism of the central stalk subunits to proton translocation. In terms of biological role, component of the F(0) channel, it forms part of the peripheral stalk, linking F(1) to F(0). In Limosilactobacillus reuteri (strain DSM 20016) (Lactobacillus reuteri), this protein is ATP synthase subunit b.